Here is a 764-residue protein sequence, read N- to C-terminus: Polyribonucleotide nucleotidyltransferase (764 aa).

Mg(2+) contacts are provided by Asp-541 and Asp-547. The 60-residue stretch at 607 to 666 (PRVTAIKIPVDKIGEVIGPKGKVINQITEDTGANISIEDDGTVFVGATDGPSAQAAIDAI) folds into the KH domain. Residues 678 to 747 (GERFLGTVVK…NRGKISLVPV (70 aa)) form the S1 motif domain.

The protein belongs to the polyribonucleotide nucleotidyltransferase family. The cofactor is Mg(2+).

The protein localises to the cytoplasm. It catalyses the reaction RNA(n+1) + phosphate = RNA(n) + a ribonucleoside 5'-diphosphate. Its function is as follows. Involved in mRNA degradation. Catalyzes the phosphorolysis of single-stranded polyribonucleotides processively in the 3'- to 5'-direction. The chain is Polyribonucleotide nucleotidyltransferase from Nocardia farcinica (strain IFM 10152).